The chain runs to 272 residues: Undecaprenyl-diphosphatase (272 aa).

A run of 8 helical transmembrane segments spans residues 6–26 (SLLV…LPVS), 45–65 (AKTF…VMFW), 89–109 (LSLI…LVFH), 115–135 (LFNP…LIIA), 156–176 (AFFI…RSGA), 189–209 (YAAS…ATAL), 221–241 (ADLP…LVAI), and 251–271 (ISFI…FAVF).

It belongs to the UppP family.

The protein localises to the cell inner membrane. It carries out the reaction di-trans,octa-cis-undecaprenyl diphosphate + H2O = di-trans,octa-cis-undecaprenyl phosphate + phosphate + H(+). Functionally, catalyzes the dephosphorylation of undecaprenyl diphosphate (UPP). Confers resistance to bacitracin. The sequence is that of Undecaprenyl-diphosphatase from Cronobacter sakazakii (strain ATCC BAA-894) (Enterobacter sakazakii).